A 1084-amino-acid chain; its full sequence is AP-3 complex subunit beta-1 (1084 aa).

Positions 1-11 (MSSNSFAYNEQ) are enriched in polar residues. Residues 1 to 26 (MSSNSFAYNEQSGGGEATELGQEATS) form a disordered region. Ser-276 and Ser-609 each carry phosphoserine. The interval 663–800 (AGKAKKENPD…KEKKTKQERN (138 aa)) is disordered. Basic and acidic residues predominate over residues 666 to 677 (AKKENPDKKFYS). The segment covering 678–717 (ESEEEEDSSESSSDSESESGSESGEDEEDDRSGDSAEDSG) has biased composition (acidic residues). Low complexity predominate over residues 718–729 (ESGSEPEAGKGR). Basic and acidic residues predominate over residues 738–753 (GRGDSKDVDKEKENSK). Ser-742 bears the Phosphoserine mark. Residues 754 to 767 (TSESSSGESSSIEE) show a composition bias toward low complexity. A compositionally biased stretch (acidic residues) spans 768 to 781 (SSSDSESESESESE). Positions 782 to 800 (SESRKVTKEKEKKTKQERN) are enriched in basic and acidic residues.

Belongs to the adaptor complexes large subunit family. Adaptor protein complex 3 (AP-3) is a heterotetramer composed of two large adaptins (delta-type subunit AP3D1 and beta-type subunit AP3B1 or AP3B2), a medium adaptin (mu-type subunit AP3M1 or AP3M2) and a small adaptin (sigma-type subunit APS1 or AP3S2). AP-3 associates with the BLOC-1 complex. Interacts with KIF3A; interaction is direct; interaction is impaired by pyrophosphorylation of AP3B1. Post-translationally, phosphorylated on serine residues. In terms of processing, pyrophosphorylation by 5-diphosphoinositol pentakisphosphate (5-IP7) impairs interaction with KIF3A. Serine pyrophosphorylation is achieved by Mg(2+)-dependent, but enzyme independent transfer of a beta-phosphate from a inositol pyrophosphate to a pre-phosphorylated serine residue.

It localises to the cytoplasmic vesicle. The protein resides in the clathrin-coated vesicle membrane. It is found in the golgi apparatus. Its function is as follows. Subunit of non-clathrin- and clathrin-associated adaptor protein complex 3 (AP-3) that plays a role in protein sorting in the late-Golgi/trans-Golgi network (TGN) and/or endosomes. The AP complexes mediate both the recruitment of clathrin to membranes and the recognition of sorting signals within the cytosolic tails of transmembrane cargo molecules. AP-3 appears to be involved in the sorting of a subset of transmembrane proteins targeted to lysosomes and lysosome-related organelles. In concert with the BLOC-1 complex, AP-3 is required to target cargos into vesicles assembled at cell bodies for delivery into neurites and nerve terminals. This is AP-3 complex subunit beta-1 (AP3B1) from Bos taurus (Bovine).